Reading from the N-terminus, the 123-residue chain is Small ribosomal subunit protein eS8 (123 aa).

A disordered region spans residues 1–37 (MKDQGRSTRKRTGGRLKHASNKKRHQLGREPAETTVG). The segment covering 7–26 (STRKRTGGRLKHASNKKRHQ) has biased composition (basic residues).

It belongs to the eukaryotic ribosomal protein eS8 family. Part of the 30S ribosomal subunit.

This is Small ribosomal subunit protein eS8 from Halorubrum lacusprofundi (strain ATCC 49239 / DSM 5036 / JCM 8891 / ACAM 34).